The primary structure comprises 620 residues: Eukaryotic translation initiation factor 2-alpha kinase 1 (620 aa).

Residues 1-38 form a disordered region; sequence MLGGGSVDGERDTDDDAAGAVAAPPAIDFPAEVSDPKY. Over residues 18–28 the composition is skewed to low complexity; it reads AGAVAAPPAID. The SIFI-degron motif lies at 85 to 104; it reads LHSKQVFKLLCQTFIKMGLL. The region spanning 167-581 is the Protein kinase domain; that stretch reads FEELAILGKG…ALQLLQSELF (415 aa). Residues 173–181 and Lys196 each bind ATP; that span reads LGKGGYGRV. Thr283 carries the post-translational modification Phosphothreonine. One copy of the HRM 1 repeat lies at 408-413; it reads ACPYVM. Catalysis depends on Asp440, which acts as the Proton acceptor. 2 positions are modified to phosphothreonine; by autocatalysis: Thr484 and Thr486. A Phosphothreonine modification is found at Thr491. Residues 550–555 form an HRM 2 repeat; it reads RCPVQA.

The protein belongs to the protein kinase superfamily. Ser/Thr protein kinase family. GCN2 subfamily. Synthesized in an inactive form that binds to the N-terminal domain of CDC37. Has to be associated with a multiprotein complex containing Hsp90, CDC37 and PPP5C for maturation and activation by autophosphorylation. The phosphatase PPP5C modulates this activation. Homodimer; homodimerizes in presence of heme, forming a disulfide-linked inactive homodimer. Interacts with DELE1; binds both to full-length DELE1 and processed form of DELE1 (S-DELE1) in response to stress, leading to activate its protein kinase activity and trigger the integrated stress response (ISR). In terms of processing, activated by autophosphorylation; phosphorylated predominantly on serine and threonine residues, but also on tyrosine residues. Autophosphorylation at Thr-486 is required for kinase activation. The active autophosphorylated form apparently is largely refractory to cellular heme fluctuations. Ubiquitinated and degraded by the SIFI complex once the mitochondrial stress has been resolved, thereby providing stress response silencing. Within the SIFI complex, UBR4 initiates ubiquitin chain that are further elongated or branched by KCMF1.

It is found in the cytoplasm. It carries out the reaction L-seryl-[protein] + ATP = O-phospho-L-seryl-[protein] + ADP + H(+). It catalyses the reaction L-threonyl-[protein] + ATP = O-phospho-L-threonyl-[protein] + ADP + H(+). Its activity is regulated as follows. In normal conditions, the protein kinase activity is inhibited; inhibition is relieved by various stress conditions. Inhibited by heme: in presence of heme, forms a disulfide-linked inactive homodimer. Heme depletion relieves inhibition and stimulates kinase activity by autophosphorylation. Inhibited by the heme metabolites biliverdin and bilirubin. Induced by oxidative stress generated by arsenite treatment. Binding of nitric oxide (NO) to the heme iron in the N-terminal heme-binding domain activates the kinase activity, while binding of carbon monoxide (CO) suppresses kinase activity. Protein kinase activity is also activated upon binding to DELE1 in response to various stress, triggering the integrated stress response (ISR): activated by full-length DELE1 in response to iron deficiency, while it is activated by the processed form of DELE1 (S-DELE1) in response to mitochondrial stress. Its function is as follows. Metabolic-stress sensing protein kinase that phosphorylates the alpha subunit of eukaryotic translation initiation factor 2 (EIF2S1/eIF-2-alpha) in response to various stress conditions. Key activator of the integrated stress response (ISR) required for adaptation to various stress, such as heme deficiency, oxidative stress, osmotic shock, mitochondrial dysfunction and heat shock. EIF2S1/eIF-2-alpha phosphorylation in response to stress converts EIF2S1/eIF-2-alpha in a global protein synthesis inhibitor, leading to a global attenuation of cap-dependent translation, while concomitantly initiating the preferential translation of ISR-specific mRNAs, such as the transcriptional activator ATF4, and hence allowing ATF4-mediated reprogramming. Acts as a key sensor of heme-deficiency: in normal conditions, binds hemin via a cysteine thiolate and histidine nitrogenous coordination, leading to inhibit the protein kinase activity. This binding occurs with moderate affinity, allowing it to sense the heme concentration within the cell: heme depletion relieves inhibition and stimulates kinase activity, activating the ISR. Thanks to this unique heme-sensing capacity, plays a crucial role to shut off protein synthesis during acute heme-deficient conditions. In red blood cells (RBCs), controls hemoglobin synthesis ensuring a coordinated regulation of the synthesis of its heme and globin moieties. It thereby plays an essential protective role for RBC survival in anemias of iron deficiency. Iron deficiency also triggers activation by full-length DELE1. Also activates the ISR in response to mitochondrial dysfunction: HRI/EIF2AK1 protein kinase activity is activated upon binding to the processed form of DELE1 (S-DELE1), thereby promoting the ATF4-mediated reprogramming. Also acts as an activator of mitophagy in response to mitochondrial damage: catalyzes phosphorylation of eIF-2-alpha (EIF2S1) following activation by S-DELE1, thereby promoting mitochondrial localization of EIF2S1, triggering PRKN-independent mitophagy. This is Eukaryotic translation initiation factor 2-alpha kinase 1 from Rattus norvegicus (Rat).